Here is a 398-residue protein sequence, read N- to C-terminus: Subtilisin-like serine protease EN45_076310 (398 aa).

Positions 1-19 (MGFLKLLSTSLATLAVVNA) are cleaved as a signal peptide. Residues 20–115 (GKLLTANDGD…VEPDMVVNAT (96 aa)) constitute a propeptide, removed in mature form. The region spanning 35–113 (SYIVVMNDGV…KYVEPDMVVN (79 aa)) is the Inhibitor I9 domain. Asn113 carries N-linked (GlcNAc...) asparagine glycosylation. The segment at 124-134 (PSWGLSRISSK) is igE-binding. The 274-residue stretch at 125 to 398 (SWGLSRISSK…KLLYNGINAQ (274 aa)) folds into the Peptidase S8 domain. Asp157 serves as the catalytic Charge relay system. Residues 163–170 (GHADFGGR) form an igE-binding region. A disordered region spans residues 175-195 (TNTADNDDTDGNGHGTHTAST). Catalysis depends on His188, which acts as the Charge relay system. An igE-binding region spans residues 227–245 (IAGMDWAVKDSKSRGATGK). Asn249 is a glycosylation site (N-linked (GlcNAc...) asparagine). The igE-binding stretch occupies residues 310-318 (SFTNFGSVV). Ser343 acts as the Charge relay system in catalysis.

The protein belongs to the peptidase S8 family.

It localises to the secreted. Its activity is regulated as follows. Inhibited by phenylmethanesulfonyl fluoride (PMSF) and diethyl pyrocarbonate (DEPC), but not by benzamidine. Serine protease that hydrolyzes casein, gelatin and human collagen type IV, but not elastin in vitro. Hydrolyzes OCLN of the human lung epithelial cells at 202-Gln-|-Ser-203 and Gln-211-|-Ile-212. This is Subtilisin-like serine protease EN45_076310 from Penicillium chrysogenum (Penicillium notatum).